Consider the following 382-residue polypeptide: D-galactonate dehydratase (382 aa).

D183 contacts Mg(2+). H185 serves as the catalytic Proton donor. Positions 209 and 235 each coordinate Mg(2+). The Proton acceptor role is filled by H285.

The protein belongs to the mandelate racemase/muconate lactonizing enzyme family. GalD subfamily. The cofactor is Mg(2+).

The catalysed reaction is D-galactonate = 2-dehydro-3-deoxy-D-galactonate + H2O. It participates in carbohydrate acid metabolism; D-galactonate degradation; D-glyceraldehyde 3-phosphate and pyruvate from D-galactonate: step 1/3. Catalyzes the dehydration of D-galactonate to 2-keto-3-deoxy-D-galactonate. This is D-galactonate dehydratase from Ralstonia pickettii (strain 12J).